The primary structure comprises 477 residues: Ketoisovalerate oxidoreductase subunit VorA (477 aa).

In terms of assembly, heterotrimer of the VorA, VorB and VorC subunits.

It catalyses the reaction 3-methyl-2-oxobutanoate + 2 oxidized [2Fe-2S]-[ferredoxin] + CoA = 2-methylpropanoyl-CoA + 2 reduced [2Fe-2S]-[ferredoxin] + CO2 + H(+). This is Ketoisovalerate oxidoreductase subunit VorA (vorA) from Methanothermobacter thermautotrophicus (strain ATCC 29096 / DSM 1053 / JCM 10044 / NBRC 100330 / Delta H) (Methanobacterium thermoautotrophicum).